Reading from the N-terminus, the 589-residue chain is BTB/POZ domain and ankyrin repeat-containing protein NPR3 (589 aa).

The interval 1-25 is disordered; it reads METSTISFSSSSPPSPPPPQPAPGD. The span at 13 to 22 shows a compositional bias: pro residues; the sequence is PPSPPPPQPA. A BTB domain is found at 52-137; sequence AEIVLASGGG…LYTGRLRSAP (86 aa). The segment at 140-154 adopts a C2HC NPR-type zinc-finger fold; the sequence is AAACLDDGCSHDACR. The Zn(2+) site is built by cysteine 143, cysteine 148, histidine 150, and cysteine 153. 3 ANK repeats span residues 260-290, 292-319, and 323-352; these read KRVRNIHKALDSDDVDLVGMLLKESPVTLDD, FAIHYAAAYCEPKVLAELLKLESANVNL, and SGYTPLHMACMRREPDIIVSLIEKGASVLE. The interval 382–521 is salicylic acid-binding core (SBC); that stretch reads ERSKAYLCIG…LDKFLNEEST (140 aa). Salicylate is bound at residue arginine 433. The segment at 555–589 is disordered; the sequence is DKAAGAAISSSTSASSSPRYETKLRPGNKKGKLSR. Over residues 558-571 the composition is skewed to low complexity; it reads AGAAISSSTSASSS. A compositionally biased stretch (basic residues) spans 580–589; it reads PGNKKGKLSR.

The protein belongs to the plant 'ANKYRIN-BTB/POZ' family. 'NPR1-like' subfamily. In terms of assembly, interacts with TGA2.1, TGA2.2, TGA2.3, LG2, TGAL1, TGAL4, NRR, RH1, RH2 and RH3.

It localises to the nucleus. It participates in protein modification; protein ubiquitination. Functionally, salicylic acid (SA)-binding substrate-specific adapter of an E3 ubiquitin-protein ligase complex (CUL3-RBX1-BTB) which mediates the ubiquitination and subsequent proteasomal degradation of target proteins. Involved in defense response against the bacterial blight disease caused by Xanthomonas oryzae pv. oryzae (Xoo). Plants expressing an NPR3/NH3 transgene driven by its native promoter show enhanced resistance to the Xoo pathogen, and exhibit elevated sensitivity to benzothiadiazole (BTH) treatment and enhanced induction of defense-related genes upon treatment with BTH. Intriguingly, constitutive over-expression of NPR3/NH3 with a ubiquitin promoter does not confer disease resistance to Xoo. This Oryza sativa subsp. japonica (Rice) protein is BTB/POZ domain and ankyrin repeat-containing protein NPR3.